Consider the following 627-residue polypeptide: Chaperone protein HtpG (627 aa).

The tract at residues 1–343 (MATQEFQAET…SEDLSLNISR (343 aa)) is a; substrate-binding. The interval 344 to 553 (EMLQQDKQLK…EGEISIEMEK (210 aa)) is b. The interval 554-627 (VLQSMPNNQN…YTNNVCKIMS (74 aa)) is c.

Belongs to the heat shock protein 90 family. As to quaternary structure, homodimer.

The protein resides in the cytoplasm. Molecular chaperone. Has ATPase activity. In Natranaerobius thermophilus (strain ATCC BAA-1301 / DSM 18059 / JW/NM-WN-LF), this protein is Chaperone protein HtpG.